A 463-amino-acid chain; its full sequence is Increased DNA methylation 3 (463 aa).

Residues Asn-169–Arg-182 show a composition bias toward basic and acidic residues. Disordered regions lie at residues Asn-169–Ser-199 and Arg-300–Thr-347. A compositionally biased stretch (polar residues) spans Gly-184–Ser-199. The span at Arg-300 to Thr-310 shows a compositional bias: basic residues.

As to quaternary structure, interacts with MBD7 (via C-terminus), IDM1 and IDM2. Part of a complex made of MBD7, IDM1, IDM2 and IDM3.

The protein resides in the nucleus. Its function is as follows. Acts as an anti-silencing factor that prevents DNA hypermethylation and gene repression. The polypeptide is Increased DNA methylation 3 (Arabidopsis thaliana (Mouse-ear cress)).